We begin with the raw amino-acid sequence, 547 residues long: Fumarate reductase (CoM/CoB) subunit A (547 aa).

The protein belongs to the FAD-dependent oxidoreductase 2 family. As to quaternary structure, subunit A of the heterodimeric fumarate reductase of methanogenic Archaea, composed of subunits A (TfrA) and B (TfrB). It depends on an oxidized flavin as a cofactor.

It localises to the cytoplasm. The catalysed reaction is coenzyme B + coenzyme M + fumarate = coenzyme M-coenzyme B heterodisulfide + succinate. Functionally, catalyzes the reduction of fumarate with reduced coenzyme M (CoM-S-H) and coenzyme B (CoB-S-H). In vitro, is able to reduces fumarate with reduced benzyl viologen, oxidize CoM-S-H and CoB-S-H to CoM-S-S-CoB with methylene blue, and reduce CoM-S-S-CoB with reduced benzyl viologen. The enzyme has specificity for the two thiol compounds as the CoB--CoM heterodisulfide reductase. The enzyme is very sensitive to oxygen. This chain is Fumarate reductase (CoM/CoB) subunit A, found in Methanothermobacter marburgensis (strain ATCC BAA-927 / DSM 2133 / JCM 14651 / NBRC 100331 / OCM 82 / Marburg) (Methanobacterium thermoautotrophicum).